Reading from the N-terminus, the 346-residue chain is Histone PARylation factor 1 (346 aa).

Met-1 is modified (N-acetylmethionine). The segment at Met-1 to Val-23 is disordered. Residue Lys-19 is modified to N6-acetyllysine. ADP-ribosylserine is present on Ser-97. 2 positions are modified to N6-acetyllysine: Lys-186 and Lys-233. PolyADP-ribosyl aspartic acid is present on Asp-235. Position 238 is an ADP-ribosyltyrosine (Tyr-238). A PolyADP-ribosyl glutamic acid modification is found at Glu-240. The segment at Pro-242 to Ala-346 is interaction with PARP1. Glu-284 serves as the catalytic Proton donor.

The protein belongs to the HPF1 family. Interacts with PARP1 (via the PARP catalytic domain). Interacts with PARP2 (via the PARP catalytic domain). Interacts with core nucleosomes in a PARP1- and PARP2-dependent manner.

The protein localises to the chromosome. Its subcellular location is the nucleus. Its function is as follows. Cofactor for serine ADP-ribosylation that confers serine specificity on PARP1 and PARP2 and plays a key role in DNA damage response. Initiates the repair of double-strand DNA breaks: recruited to DNA damage sites by PARP1 and PARP2 and switches the amino acid specificity of PARP1 and PARP2 from aspartate or glutamate to serine residues, licensing serine ADP-ribosylation of target proteins. Serine ADP-ribosylation of target proteins, such as histones, promotes decompaction of chromatin and the recruitment of repair factors leading to the reparation of DNA strand breaks. Serine ADP-ribosylation of proteins constitutes the primary form of ADP-ribosylation of proteins in response to DNA damage. HPF1 acts by completing the active site of PARP1 and PARP2: forms a composite active site composed of residues from HPF1 and PARP1 or PARP2. While HPF1 promotes the initiation of serine ADP-ribosylation, it restricts the polymerase activity of PARP1 and PARP2 in order to limit the length of poly-ADP-ribose chains. HPF1 also promotes tyrosine ADP-ribosylation, probably by conferring tyrosine specificity on PARP1. This chain is Histone PARylation factor 1, found in Homo sapiens (Human).